The chain runs to 88 residues: Low calcium response locus protein S (88 aa).

Belongs to the transposase 8 family.

This chain is Low calcium response locus protein S (lcrS), found in Yersinia pestis.